The primary structure comprises 530 residues: MSEKKKILQDIDRLLSEANSDPQLYHDNLGLLNDFVIETANNTAIRDKFSRDKETWQLIKTILVNSHVEDISGWSAEVIFLYKRLLRGVFILARNLAVSGSEIAQELLLQNIAYKIFNNSLKVGKLDDGMQLALYSTILSFLHNMSSKSVVFDRSSSKELFEFLHFPVKLNYEYTKDILLPYLLYFKDLIQHDDFLYYFLRYDKVDSILCGLILDKIMRDESQIFEIVSGTRIVSPDVNLSDIDMILLRTFALISTHESFIPYLEDKENNSFNIFIDLLKLMQLVVTNIDSWDKFQLTSIMTWTYKIFEKNADQIKNYFKNKLENEEIAKKLHAKCVITLDIMAKLCQFNHVQKFIISYKGLDQLISLLNIFQDNLIRVNFTKTSQASDITGVKATNKLGEKLAKDSLIEERIDLINMKIKETNFPECKLLIIEIIAMLTHENREIQNQVRELGGLGVILSNCVIDDNDPFIKERSIMCIKFLLKDNKENQNFVANLESKRVANDETLQEAGYEVDISKDGKLSLKSTNQ.

It belongs to the ataxin-10 family.

The protein resides in the cytoplasm. Functionally, may play a role in the regulation of cytokinesis. The protein is Ataxin-10 homolog (CTR86) of Candida glabrata (strain ATCC 2001 / BCRC 20586 / JCM 3761 / NBRC 0622 / NRRL Y-65 / CBS 138) (Yeast).